A 366-amino-acid polypeptide reads, in one-letter code: Mitogen-activated protein kinase sakA (366 aa).

In terms of domain architecture, Protein kinase spans 20-299 (YTDLQPVGMG…AGEALAHEYL (280 aa)). Residues 26 to 34 (VGMGAFGLV) and lysine 49 each bind ATP. Catalysis depends on aspartate 141, which acts as the Proton acceptor. Position 171 is a phosphothreonine (threonine 171). Residues 171–173 (TGY) carry the TXY motif. Phosphotyrosine is present on tyrosine 173.

This sequence belongs to the protein kinase superfamily. Ser/Thr protein kinase family. MAP kinase subfamily. HOG1 sub-subfamily. As to quaternary structure, interacts with the AGC kinase ypkA. Interacts with sakA upon osmotic and cell wall stresses. The cofactor is Mg(2+). Dually phosphorylated on Thr-171 and Tyr-173, which activates the enzyme. Environmental stresses such as high temperature, osmotic stress, cold stress or ethanol stress modulate the activation of sakA via phosphorylation.

The protein resides in the cytoplasm. It is found in the nucleus. It catalyses the reaction L-seryl-[protein] + ATP = O-phospho-L-seryl-[protein] + ADP + H(+). The enzyme catalyses L-threonyl-[protein] + ATP = O-phospho-L-threonyl-[protein] + ADP + H(+). Activated by tyrosine and threonine phosphorylation. Deactivated by protein phosphatase 2C homolog 2 ptcB. Functionally, proline-directed serine/threonine-protein kinase involved in a signal transduction pathway that is activated by changes in the osmolarity of the extracellular environment. Controls osmotic regulation of transcription of target genes. Involved in environmental stress response. With mpkC, plays a redundant or cooperative role in the conidial stress resistance. Also plays a supportive role in osmotic stress adaptation when sakA is deficient. Involved in paradoxical growth, the cell wall integrity (CWI) pathway and biofilm formation. Also collaborates with mpkC to allow ful virulence in a neutropenic murine model ofinvasive pulmonary aspergillosis. MpkC and sakA have both independent and collaborative functions during the transcriptional response to transient osmotic stress and sakA not only seems to modulate pathways involved in nucleotide, fatty acid, nitrogen and organic acid biosynthesis but is also important for the activation of genes involved in mitochondrial and endoplasmic reticulum functions. The protein is Mitogen-activated protein kinase sakA of Aspergillus fumigatus (strain ATCC MYA-4609 / CBS 101355 / FGSC A1100 / Af293) (Neosartorya fumigata).